The sequence spans 200 residues: GTP-binding protein ypt2 (200 aa).

GTP is bound at residue 16-23 (GDSGVGKS). The Effector region motif lies at 38-46 (FITTIGIDF). Residues 64 to 68 (DTAGQ) and 122 to 125 (NKCD) each bind GTP. Residues C199 and C200 are each lipidated (S-geranylgeranyl cysteine).

The protein belongs to the small GTPase superfamily. Rab family.

It is found in the cell membrane. Its function is as follows. Protein transport. Probably involved in vesicular traffic. This chain is GTP-binding protein ypt2 (ypt2), found in Schizosaccharomyces pombe (strain 972 / ATCC 24843) (Fission yeast).